The following is a 273-amino-acid chain: Thiazole synthase (273 aa).

Catalysis depends on Lys-111, which acts as the Schiff-base intermediate with DXP. Residues Gly-172, 198 to 199, and 220 to 221 each bind 1-deoxy-D-xylulose 5-phosphate; these read AG and NS. Residues 251–273 are disordered; the sequence is RLPRRGQASASSPTTGLISGKDK. Positions 258-267 are enriched in polar residues; the sequence is ASASSPTTGL.

Belongs to the ThiG family. As to quaternary structure, homotetramer. Forms heterodimers with either ThiH or ThiS.

It localises to the cytoplasm. The catalysed reaction is [ThiS sulfur-carrier protein]-C-terminal-Gly-aminoethanethioate + 2-iminoacetate + 1-deoxy-D-xylulose 5-phosphate = [ThiS sulfur-carrier protein]-C-terminal Gly-Gly + 2-[(2R,5Z)-2-carboxy-4-methylthiazol-5(2H)-ylidene]ethyl phosphate + 2 H2O + H(+). It functions in the pathway cofactor biosynthesis; thiamine diphosphate biosynthesis. Catalyzes the rearrangement of 1-deoxy-D-xylulose 5-phosphate (DXP) to produce the thiazole phosphate moiety of thiamine. Sulfur is provided by the thiocarboxylate moiety of the carrier protein ThiS. In vitro, sulfur can be provided by H(2)S. The polypeptide is Thiazole synthase (Synechococcus sp. (strain CC9902)).